Reading from the N-terminus, the 205-residue chain is Thymidylate kinase (205 aa).

Position 10 to 17 (10 to 17 (GIDGAGKS)) interacts with ATP.

Belongs to the thymidylate kinase family.

The catalysed reaction is dTMP + ATP = dTDP + ADP. In terms of biological role, phosphorylation of dTMP to form dTDP in both de novo and salvage pathways of dTTP synthesis. This Ralstonia nicotianae (strain ATCC BAA-1114 / GMI1000) (Ralstonia solanacearum) protein is Thymidylate kinase.